The following is a 127-amino-acid chain: Aspartate 1-decarboxylase (127 aa).

Ser-25 functions as the Schiff-base intermediate with substrate; via pyruvic acid in the catalytic mechanism. Ser-25 bears the Pyruvic acid (Ser) mark. Thr-57 contributes to the substrate binding site. Tyr-58 acts as the Proton donor in catalysis. Residue 73 to 75 (GSA) coordinates substrate.

The protein belongs to the PanD family. As to quaternary structure, heterooctamer of four alpha and four beta subunits. It depends on pyruvate as a cofactor. Post-translationally, is synthesized initially as an inactive proenzyme, which is activated by self-cleavage at a specific serine bond to produce a beta-subunit with a hydroxyl group at its C-terminus and an alpha-subunit with a pyruvoyl group at its N-terminus.

Its subcellular location is the cytoplasm. It catalyses the reaction L-aspartate + H(+) = beta-alanine + CO2. It functions in the pathway cofactor biosynthesis; (R)-pantothenate biosynthesis; beta-alanine from L-aspartate: step 1/1. In terms of biological role, catalyzes the pyruvoyl-dependent decarboxylation of aspartate to produce beta-alanine. This Laribacter hongkongensis (strain HLHK9) protein is Aspartate 1-decarboxylase.